Here is a 69-residue protein sequence, read N- to C-terminus: Arabinogalactan protein 24 (69 aa).

A signal peptide spans 1–25 (MMMMTKMFVQIAVVCLLATMAVVSA). 4 positions are modified to 4-hydroxyproline: Pro-34, Pro-36, Pro-38, and Pro-40. O-linked (Ara...) hydroxyproline glycans are attached at residues Pro-34, Pro-36, Pro-38, and Pro-40. Residue Ser-42 is the site of GPI-anchor amidated serine attachment. The propeptide at 43-69 (SSTVVSATNMFTVLAIAAVALVVGSNH) is removed in mature form.

This sequence belongs to the AG-peptide AGP family. In terms of processing, contains 4-hydroxyproline; hydroxylated on Pro-34, Pro-36, Pro-38 and Pro-40. O-glycosylated on hydroxyprolines; noncontiguous hydroxylproline residues are glycosylated with arabinogalactan.

The protein resides in the cell membrane. In terms of biological role, proteoglycan that seems to be implicated in diverse developmental roles such as differentiation, cell-cell recognition, embryogenesis and programmed cell death. This is Arabinogalactan protein 24 from Arabidopsis thaliana (Mouse-ear cress).